Consider the following 85-residue polypeptide: Cell division topological specificity factor (85 aa).

It belongs to the MinE family.

In terms of biological role, prevents the cell division inhibition by proteins MinC and MinD at internal division sites while permitting inhibition at polar sites. This ensures cell division at the proper site by restricting the formation of a division septum at the midpoint of the long axis of the cell. In Shewanella baltica (strain OS223), this protein is Cell division topological specificity factor.